Here is a 455-residue protein sequence, read N- to C-terminus: D-inositol 3-phosphate glycosyltransferase (455 aa).

Residues 1–25 are disordered; it reads MSQHVSRLGGLRGRSHGHGAFGGPY. His45 is a 1D-myo-inositol 3-phosphate binding site. UDP-N-acetyl-alpha-D-glucosamine-binding positions include 51-52 and Gly59; that span reads QP. Residues 56–61, Lys114, Tyr147, Thr171, and Arg191 contribute to the 1D-myo-inositol 3-phosphate site; that span reads DAGGMN. UDP-N-acetyl-alpha-D-glucosamine contacts are provided by Arg266 and Lys271. Residues Tyr341, Arg342, and Ala344 each contribute to the Mg(2+) site. UDP-N-acetyl-alpha-D-glucosamine contacts are provided by Glu354 and Glu362. Thr368 contacts Mg(2+).

It belongs to the glycosyltransferase group 1 family. MshA subfamily. Homodimer.

The enzyme catalyses 1D-myo-inositol 3-phosphate + UDP-N-acetyl-alpha-D-glucosamine = 1D-myo-inositol 2-acetamido-2-deoxy-alpha-D-glucopyranoside 3-phosphate + UDP + H(+). Its function is as follows. Catalyzes the transfer of a N-acetyl-glucosamine moiety to 1D-myo-inositol 3-phosphate to produce 1D-myo-inositol 2-acetamido-2-deoxy-glucopyranoside 3-phosphate in the mycothiol biosynthesis pathway. The polypeptide is D-inositol 3-phosphate glycosyltransferase (Streptomyces bingchenggensis (strain BCW-1)).